Here is a 284-residue protein sequence, read N- to C-terminus: Nodulation protein O (284 aa).

Residues 1-27 are disordered; the sequence is MNIKGSDNGSFIKGSPENDIIDGGKKN. Hemolysin-type calcium-binding repeat units lie at residues 13–30, 31–48, 58–75, 94–111, and 112–129; these read KGSP…NDWI, DAGN…QDSI, WAGK…DDLL, HSGE…SDIL, and VAGD…GDAF. Positions 100, 109, 118, and 127 each coordinate Ca(2+). An export signal (aspartic acid box) region spans residues 208-222; sequence DRGFASAAAAATAID.

It localises to the secreted. Its function is as follows. The NodO protein may play a role in nodule development by direct interaction with the root hair cells or some other plant surface in a calcium-dependent manner. This is Nodulation protein O (nodO) from Rhizobium leguminosarum bv. viciae.